The following is a 118-amino-acid chain: uncharacterized protein (118 aa).

The segment at 1–118 (MASARGAKQS…AARQNEKTAR (118 aa)) is disordered. A compositionally biased stretch (low complexity) spans 13–28 (RVGTTRYTETSTVRVE). Positions 29 to 49 (TSSHRVETSSRRVETSQRRSE) are enriched in basic and acidic residues.

This is an uncharacterized protein from Homo sapiens (Human).